Reading from the N-terminus, the 363-residue chain is UDP-N-acetylglucosamine--N-acetylmuramyl-(pentapeptide) pyrophosphoryl-undecaprenol N-acetylglucosamine transferase (363 aa).

UDP-N-acetyl-alpha-D-glucosamine is bound by residues 14-16 (TGG), Asn-122, Arg-163, Ser-190, and Gln-285.

This sequence belongs to the glycosyltransferase 28 family. MurG subfamily.

Its subcellular location is the cell inner membrane. The catalysed reaction is di-trans,octa-cis-undecaprenyl diphospho-N-acetyl-alpha-D-muramoyl-L-alanyl-D-glutamyl-meso-2,6-diaminopimeloyl-D-alanyl-D-alanine + UDP-N-acetyl-alpha-D-glucosamine = di-trans,octa-cis-undecaprenyl diphospho-[N-acetyl-alpha-D-glucosaminyl-(1-&gt;4)]-N-acetyl-alpha-D-muramoyl-L-alanyl-D-glutamyl-meso-2,6-diaminopimeloyl-D-alanyl-D-alanine + UDP + H(+). Its pathway is cell wall biogenesis; peptidoglycan biosynthesis. Its function is as follows. Cell wall formation. Catalyzes the transfer of a GlcNAc subunit on undecaprenyl-pyrophosphoryl-MurNAc-pentapeptide (lipid intermediate I) to form undecaprenyl-pyrophosphoryl-MurNAc-(pentapeptide)GlcNAc (lipid intermediate II). The chain is UDP-N-acetylglucosamine--N-acetylmuramyl-(pentapeptide) pyrophosphoryl-undecaprenol N-acetylglucosamine transferase from Prochlorococcus marinus (strain MIT 9312).